The sequence spans 213 residues: Ribonuclease HII (213 aa).

The 196-residue stretch at 18-213 (GLHAGVDEVG…RPVKERLAKR (196 aa)) folds into the RNase H type-2 domain. A divalent metal cation contacts are provided by Asp-24, Glu-25, and Asp-116.

Belongs to the RNase HII family. Mn(2+) serves as cofactor. It depends on Mg(2+) as a cofactor.

Its subcellular location is the cytoplasm. The enzyme catalyses Endonucleolytic cleavage to 5'-phosphomonoester.. Functionally, endonuclease that specifically degrades the RNA of RNA-DNA hybrids. This is Ribonuclease HII from Shewanella woodyi (strain ATCC 51908 / MS32).